The sequence spans 511 residues: Maturase K (511 aa).

Belongs to the intron maturase 2 family. MatK subfamily.

The protein resides in the plastid. It localises to the chloroplast. Functionally, usually encoded in the trnK tRNA gene intron. Probably assists in splicing its own and other chloroplast group II introns. This is Maturase K from Adesmia lanata.